The following is a 193-amino-acid chain: Holliday junction branch migration complex subunit RuvA (193 aa).

The interval 1-64 (MIGRIAGILL…EDAHLLYGFL (64 aa)) is domain I. The domain II stretch occupies residues 65-139 (TPQERTTFRE…GKLGADLGAL (75 aa)). Residues 139–143 (LAGAA) form a flexible linker region. The tract at residues 144-193 (SASDHATDILNALLALGYSEKEGLAAIKNVPAGTGVSEGIKLALKALSKA) is domain III.

Belongs to the RuvA family. Homotetramer. Forms an RuvA(8)-RuvB(12)-Holliday junction (HJ) complex. HJ DNA is sandwiched between 2 RuvA tetramers; dsDNA enters through RuvA and exits via RuvB. An RuvB hexamer assembles on each DNA strand where it exits the tetramer. Each RuvB hexamer is contacted by two RuvA subunits (via domain III) on 2 adjacent RuvB subunits; this complex drives branch migration. In the full resolvosome a probable DNA-RuvA(4)-RuvB(12)-RuvC(2) complex forms which resolves the HJ.

It is found in the cytoplasm. In terms of biological role, the RuvA-RuvB-RuvC complex processes Holliday junction (HJ) DNA during genetic recombination and DNA repair, while the RuvA-RuvB complex plays an important role in the rescue of blocked DNA replication forks via replication fork reversal (RFR). RuvA specifically binds to HJ cruciform DNA, conferring on it an open structure. The RuvB hexamer acts as an ATP-dependent pump, pulling dsDNA into and through the RuvAB complex. HJ branch migration allows RuvC to scan DNA until it finds its consensus sequence, where it cleaves and resolves the cruciform DNA. In Burkholderia cenocepacia (strain HI2424), this protein is Holliday junction branch migration complex subunit RuvA.